Consider the following 421-residue polypeptide: GTPase Obg (421 aa).

The region spanning 4 to 161 (LHFIDEAFNE…FKIKIQLKVL (158 aa)) is the Obg domain. One can recognise an OBG-type G domain in the interval 162-327 (ADVGLLGFPS…LKYAIKNLLQ (166 aa)). GTP contacts are provided by residues 168–175 (GFPSVGKS), 193–197 (FTTLF), 214–217 (DLPG), 281–284 (NKMD), and 308–310 (SLI). Mg(2+) contacts are provided by Ser175 and Thr195. One can recognise an OCT domain in the interval 343–421 (DLNSETQTFT…ICNYLFDFVI (79 aa)).

This sequence belongs to the TRAFAC class OBG-HflX-like GTPase superfamily. OBG GTPase family. As to quaternary structure, monomer. Requires Mg(2+) as cofactor.

The protein localises to the cytoplasm. Functionally, an essential GTPase which binds GTP, GDP and possibly (p)ppGpp with moderate affinity, with high nucleotide exchange rates and a fairly low GTP hydrolysis rate. Plays a role in control of the cell cycle, stress response, ribosome biogenesis and in those bacteria that undergo differentiation, in morphogenesis control. The protein is GTPase Obg of Phytoplasma australiense.